Here is a 135-residue protein sequence, read N- to C-terminus: Small ribosomal subunit protein bS18 (135 aa).

The segment at 1 to 65 (MARPDMGGPK…GDEGGGRRGF (65 aa)) is disordered. Gly residues predominate over residues 9–41 (PKTGGFGGPRSGGFGGGGGGGGGFGGGGFGGGR). A compositionally biased stretch (basic and acidic residues) spans 42–61 (GGDRGDRGDRDDRGGDEGGG).

The protein belongs to the bacterial ribosomal protein bS18 family. In terms of assembly, part of the 30S ribosomal subunit. Forms a tight heterodimer with protein bS6.

Binds as a heterodimer with protein bS6 to the central domain of the 16S rRNA, where it helps stabilize the platform of the 30S subunit. The protein is Small ribosomal subunit protein bS18 of Anaeromyxobacter sp. (strain K).